We begin with the raw amino-acid sequence, 541 residues long: Protein yellow (541 aa).

A signal peptide spans 1-21 (MFQDKGWVLLTLITLVSPSWA). An N-linked (GlcNAc...) asparagine glycan is attached at Asn144.

This sequence belongs to the major royal jelly protein family.

Its subcellular location is the secreted. Its function is as follows. Controls the pigmentation pattern of the adult cuticle and larval mouth parts. This is Protein yellow (y) from Drosophila yakuba (Fruit fly).